Reading from the N-terminus, the 364-residue chain is Aminomethyltransferase (364 aa).

It belongs to the GcvT family. As to quaternary structure, the glycine cleavage system is composed of four proteins: P, T, L and H.

The catalysed reaction is N(6)-[(R)-S(8)-aminomethyldihydrolipoyl]-L-lysyl-[protein] + (6S)-5,6,7,8-tetrahydrofolate = N(6)-[(R)-dihydrolipoyl]-L-lysyl-[protein] + (6R)-5,10-methylene-5,6,7,8-tetrahydrofolate + NH4(+). In terms of biological role, the glycine cleavage system catalyzes the degradation of glycine. This chain is Aminomethyltransferase, found in Enterobacter sp. (strain 638).